Here is a 179-residue protein sequence, read N- to C-terminus: Natural killer cells antigen CD94 (179 aa).

At 1–10 (MAVSRITRWR) the chain is on the cytoplasmic side. A helical; Signal-anchor for type II membrane protein membrane pass occupies residues 11–31 (LMSMFFGIKCLFLIVALGVLV). The Extracellular portion of the chain corresponds to 32–179 (KNSFTIQNIQ…NRFICKQLPT (148 aa)). 4 cysteine pairs are disulfide-bonded: C58/C70, C61/C72, C89/C174, and C152/C166. The region spanning 68-175 (HQCSCYFISK…CENKNRFICK (108 aa)) is the C-type lectin domain. N-linked (GlcNAc...) asparagine glycosylation occurs at N93.

In terms of assembly, can form disulfide-bonded heterodimer with NKG2 family members KLRC1 and KLRC2. KLRD1-KLRC1 heterodimer interacts with peptide-bound MHC-E-B2M heterotrimeric complex. KLRD1 plays a prominent role in directly interacting with MHC-E. KLRD1-KLRC1 interacts with much higher affinity with peptide-bound MHC-E-B2M than KLRD1-KLRC2. Interacts with the adapter protein TYROBP/DAP12; this interaction is required for cell surface expression and cell activation.

Its subcellular location is the cell membrane. Its function is as follows. Immune receptor involved in self-nonself discrimination. In complex with KLRC1 or KLRC2 on cytotoxic and regulatory lymphocyte subsets, recognizes non-classical major histocompatibility (MHC) class Ib molecule MHC-E loaded with self-peptides derived from the signal sequence of classical MHC class Ia and non-classical MHC class Ib molecules. Enables cytotoxic cells to monitor the expression of MHC class I molecules in healthy cells and to tolerate self. Primarily functions as a ligand binding subunit as it lacks the capacity to signal. In terms of biological role, KLRD1-KLRC1 acts as an immune inhibitory receptor. Key inhibitory receptor on natural killer (NK) cells that regulates their activation and effector functions. Dominantly counteracts T cell receptor signaling on a subset of memory/effector CD8-positive T cells as part of an antigen-driven response to avoid autoimmunity. On intraepithelial CD8-positive gamma-delta regulatory T cells triggers TGFB1 secretion, which in turn limits the cytotoxic programming of intraepithelial CD8-positive alpha-beta T cells, distinguishing harmless from pathogenic antigens. In MHC-E-rich tumor microenvironment, acts as an immune inhibitory checkpoint and may contribute to progressive loss of effector functions of NK cells and tumor-specific T cells, a state known as cell exhaustion. Upon MHC-E-peptide binding, transmits intracellular signals through KLRC1 immunoreceptor tyrosine-based inhibition motifs (ITIMs) by recruiting INPP5D/SHIP-1 and INPPL1/SHIP-2 tyrosine phosphatases to ITIMs, and ultimately opposing signals transmitted by activating receptors through dephosphorylation of proximal signaling molecules. KLRD1-KLRC2 acts as an immune activating receptor. On cytotoxic lymphocyte subsets recognizes MHC-E loaded with signal sequence-derived peptides from non-classical MHC class Ib MHC-G molecules, likely playing a role in the generation and effector functions of adaptive NK cells and in maternal-fetal tolerance during pregnancy. Regulates the effector functions of terminally differentiated cytotoxic lymphocyte subsets, and in particular may play a role in adaptive NK cell response to viral infection. Upon MHC-E-peptide binding, transmits intracellular signals via the adapter protein TYROBP/DAP12, triggering the phosphorylation of proximal signaling molecules and cell activation. This Rattus norvegicus (Rat) protein is Natural killer cells antigen CD94 (Klrd1).